Reading from the N-terminus, the 381-residue chain is Cytochrome b (381 aa).

4 helical membrane passes run 34–54 (FGSL…FLAM), 78–99 (WLIR…YLHI), 114–134 (WNIG…GYVL), and 179–199 (FFAF…IHLL). The heme b site is built by His-84 and His-98. The heme b site is built by His-183 and His-197. His-202 contributes to the a ubiquinone binding site. Helical transmembrane passes span 227-247 (YKDL…ALFT), 289-309 (LGGV…PLLH), 321-341 (LTQI…WIGG), and 348-368 (FIMV…IIMP).

The protein belongs to the cytochrome b family. The cytochrome bc1 complex contains 3 respiratory subunits (MT-CYB, CYC1 and UQCRFS1), 2 core proteins (UQCRC1 and UQCRC2) and probably 6 low-molecular weight proteins. Heme b serves as cofactor.

The protein localises to the mitochondrion inner membrane. Functionally, component of the ubiquinol-cytochrome c reductase complex (complex III or cytochrome b-c1 complex) that is part of the mitochondrial respiratory chain. The b-c1 complex mediates electron transfer from ubiquinol to cytochrome c. Contributes to the generation of a proton gradient across the mitochondrial membrane that is then used for ATP synthesis. The polypeptide is Cytochrome b (mt-cyb) (Negaprion brevirostris (Lemon shark)).